The sequence spans 77 residues: Mu-conotoxin BuIIIA (77 aa).

Positions 1–22 (MMSKLGVLLTICLLLFPLFALP) are cleaved as a signal peptide. The propeptide occupies 23–51 (QDGDQPADRPAERMQDDISSEQNSLLEKR). The interval 26–46 (DQPADRPAERMQDDISSEQNS) is disordered. Residues 28 to 38 (PADRPAERMQD) show a composition bias toward basic and acidic residues. 3 disulfides stabilise this stretch: Cys56/Cys67, Cys57/Cys73, and Cys63/Cys74. Cys74 is subject to Cysteine amide.

This sequence belongs to the conotoxin M superfamily. In terms of tissue distribution, expressed by the venom duct.

The protein resides in the secreted. Mu-conotoxins block voltage-gated sodium channels (Nav). This synthetic toxin potently blocks rNav1.2/SCN2A, and rNav1.4/SCN4A. It also moderately blocks rNav1.1/SCN1A, rNav1.3/SCN3A, rNav1.5/SCN5A, and mNav1.6/SCN8A. The inhibition is reversible. The chain is Mu-conotoxin BuIIIA from Conus bullatus (Bubble cone).